A 558-amino-acid chain; its full sequence is Glucose-6-phosphate isomerase (558 aa).

An N-acetylalanine modification is found at A2. At K12 the chain carries N6-acetyllysine. 2 positions are modified to phosphoserine: S86 and S107. K142 bears the N6-acetyllysine mark. 159-160 (GS) contacts D-glucose 6-phosphate. Phosphoserine; by CK2 is present on S185. Residue 210–215 (SKTFTT) participates in D-glucose 6-phosphate binding. The residue at position 250 (T250) is a Phosphothreonine. Residues Q354, E358, and H389 each contribute to the D-glucose 6-phosphate site. E358 serves as the catalytic Proton donor. H389 is an active-site residue. K454 carries the post-translational modification N6-acetyllysine; alternate. N6-malonyllysine; alternate is present on K454. K454 bears the N6-succinyllysine; alternate mark. Residue S455 is modified to Phosphoserine. Residue K519 coordinates D-glucose 6-phosphate. K519 is a catalytic residue.

Belongs to the GPI family. As to quaternary structure, homodimer; in the catalytically active form. Monomer in the secreted form. Post-translationally, phosphorylation at Ser-185 by CK2 has been shown to decrease enzymatic activity and may contribute to secretion by a non-classical secretory pathway. ISGylated.

The protein localises to the cytoplasm. The protein resides in the secreted. It catalyses the reaction alpha-D-glucose 6-phosphate = beta-D-fructose 6-phosphate. Its pathway is carbohydrate degradation; glycolysis; D-glyceraldehyde 3-phosphate and glycerone phosphate from D-glucose: step 2/4. In terms of biological role, in the cytoplasm, catalyzes the conversion of glucose-6-phosphate to fructose-6-phosphate, the second step in glycolysis, and the reverse reaction during gluconeogenesis. Besides it's role as a glycolytic enzyme, also acts as a secreted cytokine: acts as an angiogenic factor (AMF) that stimulates endothelial cell motility. Acts as a neurotrophic factor, neuroleukin, for spinal and sensory neurons. It is secreted by lectin-stimulated T-cells and induces immunoglobulin secretion. The polypeptide is Glucose-6-phosphate isomerase (Rattus norvegicus (Rat)).